The following is an 803-amino-acid chain: DNA polymerase 2 (803 aa).

Belongs to the DNA polymerase type-B family.

It carries out the reaction DNA(n) + a 2'-deoxyribonucleoside 5'-triphosphate = DNA(n+1) + diphosphate. The protein is DNA polymerase 2 (polB) of Aeropyrum pernix (strain ATCC 700893 / DSM 11879 / JCM 9820 / NBRC 100138 / K1).